Consider the following 215-residue polypeptide: Glutathione S-transferase-like protein (215 aa).

The 76-residue stretch at 1-76 folds into the GST N-terminal domain; that stretch reads MPNARILKIQ…YVAASGPAAP (76 aa). Residues 82–215 enclose the GST C-terminal domain; that stretch reads NVAEQAAVRQ…LVAVRKEASV (134 aa).

The protein belongs to the GST superfamily.

This chain is Glutathione S-transferase-like protein, found in Aspergillus aculeatus (strain ATCC 16872 / CBS 172.66 / WB 5094).